Reading from the N-terminus, the 773-residue chain is 5-methyltetrahydropteroyltriglutamate--homocysteine methyltransferase (773 aa).

5-methyltetrahydropteroyltri-L-glutamate is bound by residues 16-19 (RELK) and lysine 116. Residues 437–439 (IGS) and glutamate 490 each bind L-homocysteine. Residues 437–439 (IGS) and glutamate 490 each bind L-methionine. Residues 521 to 522 (RC) and tryptophan 567 contribute to the 5-methyltetrahydropteroyltri-L-glutamate site. Residue aspartate 605 coordinates L-homocysteine. L-methionine is bound at residue aspartate 605. 5-methyltetrahydropteroyltri-L-glutamate is bound at residue glutamate 611. The Zn(2+) site is built by histidine 647, cysteine 649, and glutamate 671. The Proton donor role is filled by histidine 700. Position 732 (cysteine 732) interacts with Zn(2+).

Belongs to the vitamin-B12 independent methionine synthase family. Zn(2+) serves as cofactor.

The enzyme catalyses 5-methyltetrahydropteroyltri-L-glutamate + L-homocysteine = tetrahydropteroyltri-L-glutamate + L-methionine. The protein operates within amino-acid biosynthesis; L-methionine biosynthesis via de novo pathway; L-methionine from L-homocysteine (MetE route): step 1/1. Its function is as follows. Catalyzes the transfer of a methyl group from 5-methyltetrahydrofolate to homocysteine resulting in methionine formation. In Alkalilimnicola ehrlichii (strain ATCC BAA-1101 / DSM 17681 / MLHE-1), this protein is 5-methyltetrahydropteroyltriglutamate--homocysteine methyltransferase.